Here is a 228-residue protein sequence, read N- to C-terminus: Superoxide dismutase [Mn], mitochondrial (228 aa).

A mitochondrion-targeting transit peptide spans 1–24; it reads MALRNLMTKKPFAGILTFRQQLRC. Mn(2+) contacts are provided by histidine 52, histidine 100, aspartate 189, and histidine 193.

Belongs to the iron/manganese superoxide dismutase family. Homotetramer. Requires Mn(2+) as cofactor.

It localises to the mitochondrion matrix. It catalyses the reaction 2 superoxide + 2 H(+) = H2O2 + O2. Its function is as follows. Destroys superoxide anion radicals which are normally produced within the cells and which are toxic to biological systems. The chain is Superoxide dismutase [Mn], mitochondrial (SODA) from Capsicum annuum (Capsicum pepper).